The following is a 502-amino-acid chain: Uric acid degradation bifunctional protein (502 aa).

Positions 1-178 are OHCU decarboxylase; sequence MMRLKQLNEM…NSMTKHKERV (178 aa). Histidine 68 functions as the Proton donor; for OHCU decarboxylase activity in the catalytic mechanism. 5-hydroxy-2-oxo-4-ureido-2,5-dihydro-1H-imidazole-5-carboxylate contacts are provided by residues proline 69, 81–85, and 116–120; these read SQEEQ and FVMAV. Residues 179 to 502 form a urate oxidase region; it reads MYYGKGDVFA…DEPDHKGALK (324 aa). Lysine 183 acts as the Charge relay system; for urate oxidase activity in catalysis. Residue lysine 194 is the Charge relay system of the active site. The active-site Charge relay system; for urate oxidase activity is threonine 243. Urate is bound by residues threonine 243, aspartate 244, phenylalanine 354, arginine 371, isoleucine 419, glutamine 420, and asparagine 446.

It in the N-terminal section; belongs to the OHCU decarboxylase family. In the C-terminal section; belongs to the uricase family.

It catalyses the reaction 5-hydroxy-2-oxo-4-ureido-2,5-dihydro-1H-imidazole-5-carboxylate + H(+) = (S)-allantoin + CO2. The catalysed reaction is urate + O2 + H2O = 5-hydroxyisourate + H2O2. Its pathway is purine metabolism; urate degradation; (S)-allantoin from urate: step 1/3. The protein operates within purine metabolism; urate degradation; (S)-allantoin from urate: step 3/3. Catalyzes two steps in the degradation of uric acid, i.e. the oxidation of uric acid to 5-hydroxyisourate (HIU) and the stereoselective decarboxylation of 2-oxo-4-hydroxy-4-carboxy-5-ureidoimidazoline (OHCU) to (S)-allantoin. The protein is Uric acid degradation bifunctional protein (uao) of Bacillus sp. (strain TB-90).